The chain runs to 356 residues: MKTAALFVSKEFEEEAIALVEGANYKVTSIYKLPKSPNVKFYIQYDKLQQIKNDEEISTLIIFEQLKPRHFINIRRELKGKEVLDKILLLLEIFALHAGSKEAKMQIELARLKYELPIIKETYTKSKIGEQQGPLGAGTYGVESTIKFYKRRINKLMKELESIKIFKEKSIESNKRNNIPSIGIVGYTNSGKTSLFNSLTGLTQKVDTKLFTTMSPKRYAIPINNRKIMLVDTVGFIRGIPPQIVDAFFVTLSEAKYSDALILVIDSTFSENLLIETLQSSFEILREIGVSGKPILVTLNKIDKINGDLYKKLDLVEKLSKELYSPIFDVIPISALKRTNLELLRDKIYQLATQLS.

Residues Pro180–Ser356 form the Hflx-type G domain. GTP contacts are provided by residues Gly186–Thr193, Phe211–Ser215, Asp232–Gly235, Asn300–Asp303, and Ser334–Leu336. Residues Thr193 and Thr213 each coordinate Mg(2+).

This sequence belongs to the TRAFAC class OBG-HflX-like GTPase superfamily. HflX GTPase family. Monomer. Associates with the 50S ribosomal subunit. Does not associate with 70S ribosomes. Mg(2+) is required as a cofactor.

Its subcellular location is the cytoplasm. With respect to regulation, GTPase activity is stimulated by the presence of 50S ribosomal subunits. Hydrolysis is probably regulated by the HflX N-terminal domain. GTPase that associates with the 50S ribosomal subunit and may have a role during protein synthesis or ribosome biogenesis. Specific for GTP. The protein is GTPase HflX of Saccharolobus solfataricus (strain ATCC 35092 / DSM 1617 / JCM 11322 / P2) (Sulfolobus solfataricus).